The chain runs to 1281 residues: MPIVMARDLEETASSSEDEEVISQEDHPCIMWTGGCRRIPVLVFHADAILTKDNNIRVIGERYHLSYKIVRTDSRLVRSILTAHGFHEVHPSSTDYNLMWTGSHLKPFLLRTLSEAQKVNHFPRSYELTRKDRLYKNIIRMQHTHGFKAFHILPQTFLLPAEYAEFCNSYSKDRGPWIVKPVASSRGRGVYLINNPNQISLEENILVSRYINNPLLIDDFKFDVRLYVLVTSYDPLVIYLYEEGLARFATVRYDQGAKNIRNQFMHLTNYSVNKKSGDYVSCDDPEVEDYGNKWSMSAMLRYLKQEGRDTTALMAHVEDLIIKTIISAELAIATACKTFVPHRSSCFELYGFDVLIDSTLKPWLLEVNLSPSLACDAPLDLKIKASMISDMFTVVGFVCQDPAQRASTRPIYPTFESSRRNPFQKPQRCRPLSASDAEMKNLVGSAREKGPGKLGGSVLGLSMEEIKVLRRVKEENDRRGGFIRIFPTSETWEIYGSYLEHKTSMNYMLATRLFQDRMTADGAPELKIESLNSKAKLHAALYERKLLSLEVRKRRRRSSRLRAMRPKYPVITQPAEMNVKTETESEEEEEVALDNEDEEQEASQEESAGFLRENQAKYTPSLTALVENTPKENSMKVREWNNKGGHCCKLETQELEPKFNLMQILQDNGNLSKMQARIAFSAYLQHVQIRLMKDSGGQTFSASWAAKEDEQMELVVRFLKRASNNLQHSLRMVLPSRRLALLERRRILAHQLGDFIIVYNKETEQMAEKKSKKKVEEEEEDGVNMENFQEFIRQASEAELEEVLTFYTQKNKSASVFLGTHSKISKNNNNYSDSGAKGDHPETIMEEVKIKPPKQQQTTEIHSDKLSRFTTSAEKEAKLVYSNSSSGPTATLQKIPNTHLSSVTTSDLSPGPCHHSSLSQIPSAIPSMPHQPTILLNTVSASASPCLHPGAQNIPSPTGLPRCRSGSHTIGPFSSFQSAAHIYSQKLSRPSSAKAGSCYLNKHHSGIAKTQKEGEDASLYSKRYNQSMVTAELQRLAEKQAARQYSPSSHINLLTQQVTNLNLATGIINRSSASAPPTLRPIISPSGPTWSTQSDPQAPENHSSSPGSRSLQTGGFAWEGEVENNVYSQATGVVPQHKYHPTAGSYQLQFALQQLEQQKLQSRQLLDQSRARHQAIFGSQTLPNSNLWTMNNGAGCRISSATASGQKPTTLPQKVVPPPSSCASLVPKPPPNHEQVLRRATSQKASKGSSAEGQLNGLQSSLNPAAFVPITSSTDPAHTKI.

The 346-residue stretch at 62–407 folds into the TTL domain; it reads RYHLSYKIVR…VCQDPAQRAS (346 aa). ATP-binding positions include Lys180, 186 to 187, 208 to 211, and 221 to 223; these read RG, SRYI, and KFD. Arg186 lines the a protein pocket. Arg247 contributes to the L-glutamate binding site. 268–269 is an ATP binding site; the sequence is TN. The L-glutamate site is built by Tyr270, Ser271, and Lys293. Mg(2+)-binding residues include Asp353, Glu366, and Asn368. A c-MTBD region region spans residues 378 to 488; that stretch reads PLDLKIKASM…RGGFIRIFPT (111 aa). L-glutamate is bound at residue Lys384. 3 disordered regions span residues 577–614, 1072–1114, and 1199–1281; these read MNVKTETESEEEEEVALDNEDEEQEASQEESAGFLREN, SASA…LQTG, and SSAT…HTKI. The span at 584–604 shows a compositional bias: acidic residues; it reads ESEEEEEVALDNEDEEQEASQ. 4 stretches are compositionally biased toward polar residues: residues 1086–1113, 1199–1212, 1240–1263, and 1270–1281; these read SGPTWSTQSDPQAPENHSSSPGSRSLQT, SSATASGQKPTTLP, ATSQKASKGSSAEGQLNGLQSSLN, and ITSSTDPAHTKI.

The protein belongs to the tubulin--tyrosine ligase family. In terms of assembly, interacts with the transcriptional coactivators NCOA1/SRC-1 and NCOA2/TIF2. Mg(2+) serves as cofactor. As to expression, expressed in the retina, found in the rod and cone photoreceptors (at protein level). Widely expressed with highest levels in heart and skeletal muscle and low levels in other tissues.

The protein localises to the cell projection. The protein resides in the cilium. It is found in the cytoplasm. It localises to the cytoskeleton. Its subcellular location is the cilium basal body. The protein localises to the nucleus. It catalyses the reaction L-glutamyl-[protein] + L-glutamate + ATP = gamma-L-glutamyl-L-glutamyl-[protein] + ADP + phosphate + H(+). The catalysed reaction is (L-glutamyl)(n)-gamma-L-glutamyl-L-glutamyl-[protein] + L-glutamate + ATP = (L-glutamyl)(n+1)-gamma-L-glutamyl-L-glutamyl-[protein] + ADP + phosphate + H(+). Its function is as follows. Polyglutamylase which modifies tubulin, generating polyglutamate side chains on the gamma-carboxyl group of specific glutamate residues within the C-terminal tail of tubulin. Preferentially mediates ATP-dependent initiation step of the polyglutamylation reaction over the elongation step. Preferentially modifies the alpha-tubulin tail over a beta-tail. Required for CCSAP localization to both polyglutamylated spindle and cilia microtubules. Increases the effects of transcriptional coactivator NCOA2/TIF2 in glucocorticoid receptor-mediated repression and induction and in androgen receptor-mediated induction. The protein is Tubulin polyglutamylase TTLL5 of Homo sapiens (Human).